The primary structure comprises 272 residues: GTP cyclohydrolase FolE2 (272 aa).

It belongs to the GTP cyclohydrolase IV family.

The enzyme catalyses GTP + H2O = 7,8-dihydroneopterin 3'-triphosphate + formate + H(+). Its pathway is cofactor biosynthesis; 7,8-dihydroneopterin triphosphate biosynthesis; 7,8-dihydroneopterin triphosphate from GTP: step 1/1. Its function is as follows. Converts GTP to 7,8-dihydroneopterin triphosphate. In Aromatoleum aromaticum (strain DSM 19018 / LMG 30748 / EbN1) (Azoarcus sp. (strain EbN1)), this protein is GTP cyclohydrolase FolE2.